The primary structure comprises 345 residues: uncharacterized protein (345 aa).

The protein resides in the cell membrane. Involved in potassium and divalent cation transport. Enhances the transport activity of the cation/potassium transporter CzcD. This is an uncharacterized protein from Bacillus subtilis (strain 168).